The chain runs to 563 residues: DNA polymerase III subunit tau (563 aa).

Position 45–52 (45–52) interacts with ATP; the sequence is GPRGTGKT. C64, C73, C76, and C79 together coordinate Zn(2+).

The protein belongs to the DnaX/STICHEL family. Component of the DNA clamp loading complex consisting of tau(3):delta(1):delta'(1). The DNA polymerase III holoenzyme complex contains at least 10 different subunits organized into 3 functionally essential subassemblies: the Pol III core, the beta sliding clamp processivity factor and the clamp-loading complex. The Pol III core (subunits alpha, epsilon and theta) contains the polymerase and the 3'-5' exonuclease proofreading activities. The polymerase is tethered to the template via the dimeric beta sliding clamp processivity factor. The DNA clamp-loading complex assembles the beta sliding clamp onto the primed template and plays a central role in the organization and communication at the replication fork. Forms a complex with replicative DNA helicase DnaB (shown with G.stearothermophilus DnaB) tau(3):DnaB(6); a single ATP hydrolysis even is sufficient for complex formation. Colocalizes with DNA helicases PriA, RecQ and RecS.

Its subcellular location is the cytoplasm. The protein resides in the nucleoid. It carries out the reaction DNA(n) + a 2'-deoxyribonucleoside 5'-triphosphate = DNA(n+1) + diphosphate. In terms of biological role, part of the beta sliding clamp loading complex, which hydrolyzes ATP to load the beta clamp onto primed DNA to form the DNA replication pre-initiation complex. DNA polymerase III is a complex, multichain enzyme responsible for most of the replicative DNA synthesis in bacteria. The sequence is that of DNA polymerase III subunit tau from Bacillus subtilis (strain 168).